Consider the following 547-residue polypeptide: Mercuric reductase (547 aa).

Residues 4–67 (NSYKIPIQGM…NISAAGYQPG (64 aa)) form the HMA domain. Residues Cys15 and Cys18 each contribute to the a metal cation site. FAD contacts are provided by Ala97, Gly117, and Thr122. A disulfide bond links Cys123 and Cys128. Residues Lys132, Ala196, Asp388, and Val396 each coordinate FAD. Hg(2+) is bound by residues Cys544 and Cys545.

The protein belongs to the class-I pyridine nucleotide-disulfide oxidoreductase family. Homodimer. FAD serves as cofactor.

The catalysed reaction is Hg + NADP(+) + H(+) = Hg(2+) + NADPH. Functionally, resistance to Hg(2+) in bacteria appears to be governed by a specialized system which includes mercuric reductase. MerA protein is responsible for volatilizing mercury as Hg(0). This is Mercuric reductase (merA) from Staphylococcus aureus.